The sequence spans 205 residues: Transmembrane emp24 domain-containing protein A (205 aa).

A signal peptide spans 1-24 (MMNNKLLLLVIALLCIASNSIVES). Topologically, residues 25 to 172 (FSFKVSAKVE…RNTAESTNSR (148 aa)) are lumenal. A GOLD domain is found at 34-116 (EECIYEEIGV…DKTVSFILSV (83 aa)). The chain crosses the membrane as a helical span at residues 173–193 (VLWWSVFEAFVLIALSIWQIY). Residues 194–205 (YLRRFFEVKRAV) lie on the Cytoplasmic side of the membrane.

It belongs to the EMP24/GP25L family.

It localises to the cytoplasmic vesicle membrane. Functionally, could have a role in the budding of coatomer-coated and other species of coated vesicles. The chain is Transmembrane emp24 domain-containing protein A (empA) from Dictyostelium discoideum (Social amoeba).